We begin with the raw amino-acid sequence, 283 residues long: ESX-1 secretion-associated protein EspG1 (283 aa).

Belongs to the EspG family. As to quaternary structure, interacts specifically with ESX-1-dependent PE/PPE proteins. Interacts with PPE68.

It localises to the cytoplasm. Functionally, specific chaperone for cognate PE/PPE proteins. Plays an important role in preventing aggregation of PE/PPE dimers. The protein is ESX-1 secretion-associated protein EspG1 of Mycobacterium tuberculosis (strain ATCC 25618 / H37Rv).